The sequence spans 746 residues: Stromal interaction molecule 2 (746 aa).

The N-terminal stretch at Met1 to Gly14 is a signal peptide. Residues Cys15–Phe218 are Extracellular-facing. Phosphoserine is present on Ser28. The region spanning Phe67–Tyr102 is the EF-hand domain. Residues Asp80, Asp82, Asp84, and Glu91 each coordinate Ca(2+). Residue Asn135 is glycosylated (N-linked (GlcNAc...) asparagine). The region spanning Trp136–Phe204 is the SAM domain. A helical membrane pass occupies residues Ile219–Tyr235. The Cytoplasmic segment spans residues Thr236 to Lys746. A coiled-coil region spans residues Lys247–Val394. 2 disordered regions span residues Pro490–Leu562 and Asp592–Pro651. Ser523 carries the phosphoserine modification. The span at Gln527–Ala539 shows a compositional bias: low complexity. A compositionally biased stretch (basic residues) spans His540 to His549. Phosphoserine occurs at positions 609 and 621. Residues Ile625–Arg637 show a composition bias toward basic and acidic residues. Ser640, Ser650, Ser661, Ser665, Ser680, and Ser697 each carry phosphoserine. Residues Leu684 to Lys746 form a disordered region. Residues Asp723–Lys732 are compositionally biased toward basic and acidic residues. Residues Lys733–Lys746 show a composition bias toward basic residues.

Oligomer with STIM1. Interacts with ORAI1. Post-translationally, glycosylated. Phosphorylated predominantly on Ser residues.

The protein resides in the endoplasmic reticulum membrane. In terms of biological role, plays a role in mediating store-operated Ca(2+) entry (SOCE), a Ca(2+) influx following depletion of intracellular Ca(2+) stores. Functions as a highly sensitive Ca(2+) sensor in the endoplasmic reticulum which activates both store-operated and store-independent Ca(2+)-influx. Regulates basal cytosolic and endoplasmic reticulum Ca(2+) concentrations. Upon mild variations of the endoplasmic reticulum Ca(2+) concentration, translocates from the endoplasmic reticulum to the plasma membrane where it probably activates the Ca(2+) release-activated Ca(2+) (CRAC) channels ORAI1, ORAI2 and ORAI3. May inhibit STIM1-mediated Ca(2+) influx. This is Stromal interaction molecule 2 (Stim2) from Mus musculus (Mouse).